The following is a 373-amino-acid chain: Peptide chain release factor 2 (373 aa).

Q251 carries the N5-methylglutamine modification.

The protein belongs to the prokaryotic/mitochondrial release factor family. Post-translationally, methylated by PrmC. Methylation increases the termination efficiency of RF2.

Its subcellular location is the cytoplasm. Peptide chain release factor 2 directs the termination of translation in response to the peptide chain termination codons UGA and UAA. This chain is Peptide chain release factor 2, found in Salinispora tropica (strain ATCC BAA-916 / DSM 44818 / JCM 13857 / NBRC 105044 / CNB-440).